The chain runs to 579 residues: MYGRTARASELLDNLKGEIDALNHELSLYKHQKDDYERKFQNQLAELNTIQQTLYDLERGQNKMKIHYEEEIRQLKRQLEQQNINASQRDLNSPSTFRSNSPAPPAQHNNNNNNIINNNNNNNNNNNNMQRNTPTPTIPDKGQPKQRQRSGSGEFYQQPGLGPQQLNFQQLNLQQQQQQLQQQQQQGSGQSFPSLSPLDSNRHPKEMGNNMSGNSMSMNNNNNNLNKKPDMEEVKEEDRRRHDTEMSEENGKEKGTDWLVGYNPSVQTNLNIDLLHNLQHNSVVCCVNFSNDGKYLATGCNRSAQIYDVDTGKKVHAFVDESEKDGDLYIRSVCFSPDGNYLATGAEDKTVKVWDIHTKKIQHTFYGHELDIYSLDYSSDGRFIVSGSGDKKAKIWDIEKGKCAFTLGNEEVGPKNGVTSVAMSPDGRLVAAGSLDNIVRLWDAQTGYFLERYEGHLDSVYSVAFSPDGKSLASGSLDKSLKLWDLSGSRSRSRCRATFNGHKDFVLSVAFSPDGSWLISGSKDRSVQFWDPRNGTTHMMLQGHKNSVISVALSPKNNSHGVFATGSGDFRSRLWKYDS.

The segment covering 83-101 (NINASQRDLNSPSTFRSNS) has biased composition (polar residues). The disordered stretch occupies residues 83–258 (NINASQRDLN…ENGKEKGTDW (176 aa)). Low complexity-rich tracts occupy residues 109–128 (NNNN…NNNN), 157–198 (QQPG…LSPL), and 207–224 (MGNN…NNNN). A compositionally biased stretch (basic and acidic residues) spans 227–256 (KKPDMEEVKEEDRRRHDTEMSEENGKEKGT). WD repeat units follow at residues 279–319 (QHNS…HAFV), 325–364 (DGDL…IQHT), 367–406 (GHEL…CAFT), 413–452 (GPKN…FLER), 455–494 (GHLD…SRSR), 501–540 (GHKD…THMM), and 543–579 (GHKN…KYDS).

This sequence belongs to the WD repeat TUP1 family. In terms of assembly, associates with trfA to form the trfA-tupA corepressor complex.

It localises to the nucleus. In terms of biological role, acts as a component of the trfA-tupA corepressor complex which is involved in the repression of many genes in a wide variety of physiological processes. May also be involved in the derepression of at least some target genes. The complex is recruited to target genes by interaction with DNA-bound transcriptional repressors. The complex recruits histone deacetylases to produce a repressive chromatin structure, interacts with hypoacetylated N-terminal tails of histones H3 and H4 that have been programmed for repression by the action of histone deacetylases and interferes directly with the transcriptional machinery by associating with the RNA polymerase II mediator complex. This is General transcriptional corepressor tupA (tupA) from Dictyostelium discoideum (Social amoeba).